Consider the following 366-residue polypeptide: Glycerol-3-phosphate dehydrogenase [NAD(+)], glycosomal (366 aa).

Residues 22-27 (GSGAFG), Phe-97, Lys-125, and Ala-157 contribute to the NAD(+) site. Lys-125 contacts substrate. The Proton acceptor role is filled by Lys-210. Residues Arg-274, Val-298, and Glu-300 each coordinate NAD(+). 274–275 (RN) contributes to the substrate binding site. Residues 364–366 (SKL) carry the Microbody targeting signal motif.

It belongs to the NAD-dependent glycerol-3-phosphate dehydrogenase family. As to quaternary structure, homodimer.

It is found in the glycosome. It catalyses the reaction sn-glycerol 3-phosphate + NAD(+) = dihydroxyacetone phosphate + NADH + H(+). This chain is Glycerol-3-phosphate dehydrogenase [NAD(+)], glycosomal (GPD), found in Leishmania mexicana.